The following is a 353-amino-acid chain: Photosystem II D2 protein (353 aa).

Thr2 carries the N-acetylthreonine modification. Thr2 is modified (phosphothreonine). A helical membrane pass occupies residues 41 to 61 (CAYFALGGWFTGTTFVTSWYT). His118 is a binding site for chlorophyll a. Residues 125–141 (GFMLRQFELARSVQLRP) form a helical membrane-spanning segment. Residues Gln130 and Asn143 each contribute to the pheophytin a site. The helical transmembrane segment at 153–166 (VFVSVFLIYPLGQS) threads the bilayer. His198 serves as a coordination point for chlorophyll a. Residues 208–228 (AALLCAIHGATVENTLFEDGD) form a helical membrane-spanning segment. Residues His215 and Phe262 each coordinate a plastoquinone. His215 contacts Fe cation. His269 serves as a coordination point for Fe cation. Residues 279–295 (GLWMSAIGVVGLALNLR) traverse the membrane as a helical segment.

It belongs to the reaction center PufL/M/PsbA/D family. PSII is composed of 1 copy each of membrane proteins PsbA, PsbB, PsbC, PsbD, PsbE, PsbF, PsbH, PsbI, PsbJ, PsbK, PsbL, PsbM, PsbT, PsbX, PsbY, PsbZ, Psb30/Ycf12, at least 3 peripheral proteins of the oxygen-evolving complex and a large number of cofactors. It forms dimeric complexes. It depends on The D1/D2 heterodimer binds P680, chlorophylls that are the primary electron donor of PSII, and subsequent electron acceptors. It shares a non-heme iron and each subunit binds pheophytin, quinone, additional chlorophylls, carotenoids and lipids. There is also a Cl(-1) ion associated with D1 and D2, which is required for oxygen evolution. The PSII complex binds additional chlorophylls, carotenoids and specific lipids. as a cofactor. In terms of processing, phosphorylated on threonine residue(s); phosphorylation increases with increasing light levels.

The protein resides in the plastid. The protein localises to the chloroplast thylakoid membrane. It catalyses the reaction 2 a plastoquinone + 4 hnu + 2 H2O = 2 a plastoquinol + O2. Functionally, photosystem II (PSII) is a light-driven water:plastoquinone oxidoreductase that uses light energy to abstract electrons from H(2)O, generating O(2) and a proton gradient subsequently used for ATP formation. It consists of a core antenna complex that captures photons, and an electron transfer chain that converts photonic excitation into a charge separation. The D1/D2 (PsbA/PsbD) reaction center heterodimer binds P680, the primary electron donor of PSII as well as several subsequent electron acceptors. D2 is needed for assembly of a stable PSII complex. The chain is Photosystem II D2 protein from Marchantia polymorpha (Common liverwort).